Reading from the N-terminus, the 41-residue chain is Large ribosomal subunit protein bL36 (41 aa).

The protein belongs to the bacterial ribosomal protein bL36 family.

This Azorhizobium caulinodans (strain ATCC 43989 / DSM 5975 / JCM 20966 / LMG 6465 / NBRC 14845 / NCIMB 13405 / ORS 571) protein is Large ribosomal subunit protein bL36.